The following is a 181-amino-acid chain: Crossover junction endodeoxyribonuclease RuvC (181 aa).

Catalysis depends on residues D8, E67, and D139. Residues D8, E67, and D139 each coordinate Mg(2+).

This sequence belongs to the RuvC family. As to quaternary structure, homodimer which binds Holliday junction (HJ) DNA. The HJ becomes 2-fold symmetrical on binding to RuvC with unstacked arms; it has a different conformation from HJ DNA in complex with RuvA. In the full resolvosome a probable DNA-RuvA(4)-RuvB(12)-RuvC(2) complex forms which resolves the HJ. Requires Mg(2+) as cofactor.

The protein localises to the cytoplasm. It carries out the reaction Endonucleolytic cleavage at a junction such as a reciprocal single-stranded crossover between two homologous DNA duplexes (Holliday junction).. The RuvA-RuvB-RuvC complex processes Holliday junction (HJ) DNA during genetic recombination and DNA repair. Endonuclease that resolves HJ intermediates. Cleaves cruciform DNA by making single-stranded nicks across the HJ at symmetrical positions within the homologous arms, yielding a 5'-phosphate and a 3'-hydroxyl group; requires a central core of homology in the junction. The consensus cleavage sequence is 5'-(A/T)TT(C/G)-3'. Cleavage occurs on the 3'-side of the TT dinucleotide at the point of strand exchange. HJ branch migration catalyzed by RuvA-RuvB allows RuvC to scan DNA until it finds its consensus sequence, where it cleaves and resolves the cruciform DNA. In Acinetobacter baumannii (strain SDF), this protein is Crossover junction endodeoxyribonuclease RuvC.